A 152-amino-acid polypeptide reads, in one-letter code: Protein FERTILITY RESTORER RF2, mitochondrial (152 aa).

The N-terminal 52 residues, 1–52 (MSTLVTCSLPGAVTTHASTRRFGGSQFQTSQASCISFKREVSAKAVLRSVRC), are a transit peptide targeting the mitochondrion. The span at 52–69 (CNATQTQSAQRKSSTATV) shows a compositional bias: polar residues. The tract at residues 52-101 (CNATQTQSAQRKSSTATVKRSDPKGKTQGPKLDDGSGGFPPFRFGKGGGG) is disordered.

It localises to the mitochondrion. Functionally, non-functional allele of the RF2 fertility restorer of rice varieties with LD-type cytoplasmic male sterility (CMS). Non-functional RF2 alleles are found in japonica cultivars Taichung 65 and Nipponbare (AC F1SZ44), and is due to the presence of Thr-78 which replaces Ile-78 in the functional allele. Functional allele is found in the japonica cultivars Fukuyama and Owarihatamochi (AC F1SZ42), and indica cultivar Kasalath (AC F1SZ41). The protein is Protein FERTILITY RESTORER RF2, mitochondrial of Oryza sativa subsp. japonica (Rice).